We begin with the raw amino-acid sequence, 583 residues long: Proteasome-associated ATPase (583 aa).

A compositionally biased stretch (polar residues) spans 1 to 19; sequence METPNQDSGRTPTEQSAAN. Residues 1-22 are disordered; that stretch reads METPNQDSGRTPTEQSAANDLS. A coiled-coil region spans residues 24–75; the sequence is ADRQVNILRDKLRHIDRQLAAATQNNTKLVSMLETAKAEILRLKNALDQEGQ. An ATP-binding site is contributed by 271–276; it reads GCGKTL. Positions 582 to 583 are docks into pockets in the proteasome alpha-ring; that stretch reads YL.

The protein belongs to the AAA ATPase family. As to quaternary structure, homohexamer. Assembles into a hexameric ring structure that caps the 20S proteasome core. Strongly interacts with the prokaryotic ubiquitin-like protein Pup through a hydrophobic interface; the interacting region of ARC lies in its N-terminal coiled-coil domain. There is one Pup binding site per ARC hexamer ring. Upon ATP-binding, the C-terminus of ARC interacts with the alpha-rings of the proteasome core, possibly by binding to the intersubunit pockets.

The protein operates within protein degradation; proteasomal Pup-dependent pathway. In terms of biological role, ATPase which is responsible for recognizing, binding, unfolding and translocation of pupylated proteins into the bacterial 20S proteasome core particle. May be essential for opening the gate of the 20S proteasome via an interaction with its C-terminus, thereby allowing substrate entry and access to the site of proteolysis. Thus, the C-termini of the proteasomal ATPase may function like a 'key in a lock' to induce gate opening and therefore regulate proteolysis. This Pseudarthrobacter chlorophenolicus (strain ATCC 700700 / DSM 12829 / CIP 107037 / JCM 12360 / KCTC 9906 / NCIMB 13794 / A6) (Arthrobacter chlorophenolicus) protein is Proteasome-associated ATPase.